The following is a 393-amino-acid chain: S-adenosylmethionine synthase (393 aa).

H16 contributes to the ATP binding site. D18 contacts Mg(2+). Position 44 (E44) interacts with K(+). L-methionine contacts are provided by E57 and Q100. The segment at 100 to 110 is flexible loop; it reads QSNDIAQGVDH. ATP contacts are provided by residues 167–169, 238–239, D247, 253–254, A270, and K274; these read DAK, RF, and RK. D247 is a binding site for L-methionine. K278 lines the L-methionine pocket.

The protein belongs to the AdoMet synthase family. In terms of assembly, homotetramer; dimer of dimers. The cofactor is Mg(2+). It depends on K(+) as a cofactor.

It is found in the cytoplasm. The catalysed reaction is L-methionine + ATP + H2O = S-adenosyl-L-methionine + phosphate + diphosphate. The protein operates within amino-acid biosynthesis; S-adenosyl-L-methionine biosynthesis; S-adenosyl-L-methionine from L-methionine: step 1/1. Its function is as follows. Catalyzes the formation of S-adenosylmethionine (AdoMet) from methionine and ATP. The overall synthetic reaction is composed of two sequential steps, AdoMet formation and the subsequent tripolyphosphate hydrolysis which occurs prior to release of AdoMet from the enzyme. This chain is S-adenosylmethionine synthase, found in Paracidovorax citrulli (strain AAC00-1) (Acidovorax citrulli).